We begin with the raw amino-acid sequence, 210 residues long: Guanylate kinase (210 aa).

Residues 5 to 184 (GLLIVFSGPS…AAERVKHIIE (180 aa)) enclose the Guanylate kinase-like domain. 12 to 19 (GPSGVGKG) contributes to the ATP binding site.

The protein belongs to the guanylate kinase family.

It localises to the cytoplasm. It catalyses the reaction GMP + ATP = GDP + ADP. Its function is as follows. Essential for recycling GMP and indirectly, cGMP. The sequence is that of Guanylate kinase from Streptococcus mutans serotype c (strain ATCC 700610 / UA159).